The following is a 160-amino-acid chain: Large ribosomal subunit protein uL15 (160 aa).

Residues 1-14 (MKLNDISDNPGSSK) show a composition bias toward polar residues. The disordered stretch occupies residues 1–35 (MKLNDISDNPGSSKSRMRVGRGIGSGKGKTCGRGV). A compositionally biased stretch (gly residues) spans 21-35 (RGIGSGKGKTCGRGV).

Belongs to the universal ribosomal protein uL15 family. Part of the 50S ribosomal subunit.

Functionally, binds to the 23S rRNA. The chain is Large ribosomal subunit protein uL15 from Beijerinckia indica subsp. indica (strain ATCC 9039 / DSM 1715 / NCIMB 8712).